We begin with the raw amino-acid sequence, 172 residues long: Sec-independent protein translocase protein TatB (172 aa).

The chain crosses the membrane as a helical span at residues 1–21 (MFDIGWSELLVIGVVALIAIG).

This sequence belongs to the TatB family. In terms of assembly, the Tat system comprises two distinct complexes: a TatABC complex, containing multiple copies of TatA, TatB and TatC subunits, and a separate TatA complex, containing only TatA subunits. Substrates initially bind to the TatABC complex, which probably triggers association of the separate TatA complex to form the active translocon.

Its subcellular location is the cell inner membrane. In terms of biological role, part of the twin-arginine translocation (Tat) system that transports large folded proteins containing a characteristic twin-arginine motif in their signal peptide across membranes. Together with TatC, TatB is part of a receptor directly interacting with Tat signal peptides. TatB may form an oligomeric binding site that transiently accommodates folded Tat precursor proteins before their translocation. The polypeptide is Sec-independent protein translocase protein TatB (Rhodopseudomonas palustris (strain BisB18)).